Reading from the N-terminus, the 211-residue chain is Nucleoside triphosphate pyrophosphatase (211 aa).

The active-site Proton acceptor is Asp-75.

Belongs to the Maf family. The cofactor is a divalent metal cation.

Its subcellular location is the cytoplasm. The catalysed reaction is a ribonucleoside 5'-triphosphate + H2O = a ribonucleoside 5'-phosphate + diphosphate + H(+). It catalyses the reaction a 2'-deoxyribonucleoside 5'-triphosphate + H2O = a 2'-deoxyribonucleoside 5'-phosphate + diphosphate + H(+). Nucleoside triphosphate pyrophosphatase. May have a dual role in cell division arrest and in preventing the incorporation of modified nucleotides into cellular nucleic acids. The polypeptide is Nucleoside triphosphate pyrophosphatase (Prochlorococcus marinus (strain NATL2A)).